The sequence spans 427 residues: Glutamate-1-semialdehyde 2,1-aminomutase (427 aa).

Lysine 263 carries the N6-(pyridoxal phosphate)lysine modification.

It belongs to the class-III pyridoxal-phosphate-dependent aminotransferase family. HemL subfamily. As to quaternary structure, homodimer. Requires pyridoxal 5'-phosphate as cofactor.

It localises to the cytoplasm. The catalysed reaction is (S)-4-amino-5-oxopentanoate = 5-aminolevulinate. Its pathway is porphyrin-containing compound metabolism; protoporphyrin-IX biosynthesis; 5-aminolevulinate from L-glutamyl-tRNA(Glu): step 2/2. This is Glutamate-1-semialdehyde 2,1-aminomutase from Caldicellulosiruptor saccharolyticus (strain ATCC 43494 / DSM 8903 / Tp8T 6331).